The primary structure comprises 191 residues: Protein YceI (191 aa).

The N-terminal stretch at 1–22 (MKKNLLGFTLASLLFTTGSAVA) is a signal peptide.

The protein belongs to the UPF0312 family. Type 1 subfamily.

It localises to the periplasm. This is Protein YceI from Salmonella newport (strain SL254).